Consider the following 111-residue polypeptide: Flagellar hook-basal body complex protein FliE (111 aa).

The protein belongs to the FliE family.

Its subcellular location is the bacterial flagellum basal body. The polypeptide is Flagellar hook-basal body complex protein FliE (Brucella abortus (strain S19)).